A 149-amino-acid polypeptide reads, in one-letter code: 3-dehydroquinate dehydratase (149 aa).

Tyrosine 24 functions as the Proton acceptor in the catalytic mechanism. Substrate contacts are provided by asparagine 76, histidine 82, and aspartate 89. The active-site Proton donor is histidine 102. Substrate-binding positions include 103-104 (LS) and arginine 113.

The protein belongs to the type-II 3-dehydroquinase family. As to quaternary structure, homododecamer.

The catalysed reaction is 3-dehydroquinate = 3-dehydroshikimate + H2O. Its pathway is metabolic intermediate biosynthesis; chorismate biosynthesis; chorismate from D-erythrose 4-phosphate and phosphoenolpyruvate: step 3/7. Functionally, catalyzes a trans-dehydration via an enolate intermediate. In Acinetobacter baylyi (strain ATCC 33305 / BD413 / ADP1), this protein is 3-dehydroquinate dehydratase.